A 328-amino-acid chain; its full sequence is Tetraacyldisaccharide 4'-kinase (328 aa).

55-62 (TAGGNGKT) contributes to the ATP binding site.

It belongs to the LpxK family.

It carries out the reaction a lipid A disaccharide + ATP = a lipid IVA + ADP + H(+). Its pathway is glycolipid biosynthesis; lipid IV(A) biosynthesis; lipid IV(A) from (3R)-3-hydroxytetradecanoyl-[acyl-carrier-protein] and UDP-N-acetyl-alpha-D-glucosamine: step 6/6. Functionally, transfers the gamma-phosphate of ATP to the 4'-position of a tetraacyldisaccharide 1-phosphate intermediate (termed DS-1-P) to form tetraacyldisaccharide 1,4'-bis-phosphate (lipid IVA). The polypeptide is Tetraacyldisaccharide 4'-kinase (Escherichia coli O45:K1 (strain S88 / ExPEC)).